The primary structure comprises 288 residues: Polyamine aminopropyltransferase (288 aa).

One can recognise a PABS domain in the interval 9 to 238 (ETLHDQFGQY…GIMTFAWATD (230 aa)). Gln33 is an S-methyl-5'-thioadenosine binding site. 2 residues coordinate spermidine: His64 and Asp88. S-methyl-5'-thioadenosine contacts are provided by residues Glu108 and 140 to 141 (DG). Asp158 (proton acceptor) is an active-site residue. A spermidine-binding site is contributed by 158–161 (DCTD). An S-methyl-5'-thioadenosine-binding site is contributed by Pro165.

This sequence belongs to the spermidine/spermine synthase family. Homodimer or homotetramer.

The protein localises to the cytoplasm. The enzyme catalyses S-adenosyl 3-(methylsulfanyl)propylamine + putrescine = S-methyl-5'-thioadenosine + spermidine + H(+). Its pathway is amine and polyamine biosynthesis; spermidine biosynthesis; spermidine from putrescine: step 1/1. Functionally, catalyzes the irreversible transfer of a propylamine group from the amino donor S-adenosylmethioninamine (decarboxy-AdoMet) to putrescine (1,4-diaminobutane) to yield spermidine. The chain is Polyamine aminopropyltransferase from Shigella sonnei (strain Ss046).